A 438-amino-acid chain; its full sequence is Gamma-glutamyl phosphate reductase (438 aa).

It belongs to the gamma-glutamyl phosphate reductase family.

Its subcellular location is the cytoplasm. It catalyses the reaction L-glutamate 5-semialdehyde + phosphate + NADP(+) = L-glutamyl 5-phosphate + NADPH + H(+). Its pathway is amino-acid biosynthesis; L-proline biosynthesis; L-glutamate 5-semialdehyde from L-glutamate: step 2/2. In terms of biological role, catalyzes the NADPH-dependent reduction of L-glutamate 5-phosphate into L-glutamate 5-semialdehyde and phosphate. The product spontaneously undergoes cyclization to form 1-pyrroline-5-carboxylate. The polypeptide is Gamma-glutamyl phosphate reductase (Natronomonas pharaonis (strain ATCC 35678 / DSM 2160 / CIP 103997 / JCM 8858 / NBRC 14720 / NCIMB 2260 / Gabara) (Halobacterium pharaonis)).